The following is a 458-amino-acid chain: MIPSTAAAALLTLTAGVALAHPGCGGQEIGRRNVGGPMVYRRDVTDEASAAASTDVNTECTAYGYAPVTEIASSFPTIWETASILSNDTEGQQLFATINSTLNTKLPNDVPHGTPTGDWTGVNYNSSDPDCWWTHNKCTTPASDTGLEADITIVPEPMTWGLGFDDGPNCSHNALYNLLSENNQKATMFFIGSNVMDWPLQAMRAHDEGHQICVHTWSHQYMTALSNEVVFAELYYTQKAIKAVLGVTPQCWRPPYGDVDNRVRMIAQALNLTTIIWSDDTDDWAAGTDGVTEQDVTDNYQAVIDKAGNGTYTTHGPVVLNHELTNYTMSVFMTMFPKIKSAFSYIVPMCTAYNITQPYLESNVTCPNFETYISGVTNISSSTTQKDGSSSTNTSSSGSGSAAGSASATSSSDDSSSSGSASASSSSSNASSGALGMFDGLSGVGLVLSGVVAGVMLL.

The N-terminal stretch at 1–51 (MIPSTAAAALLTLTAGVALAHPGCGGQEIGRRNVGGPMVYRRDVTDEASAA) is a signal peptide. N-linked (GlcNAc...) asparagine glycosylation is found at N87, N99, and N125. The NodB homology domain maps to 158–348 (MTWGLGFDDG…IKSAFSYIVP (191 aa)). Catalysis depends on D165, which acts as the Proton acceptor. Residue D165 participates in acetate binding. D166 lines the Co(2+) pocket. Residue N169 is glycosylated (N-linked (GlcNAc...) asparagine). H215 and H219 together coordinate Co(2+). Y256 provides a ligand contact to acetate. N-linked (GlcNAc...) asparagine glycosylation is found at N271 and N309. H322 serves as the catalytic Proton donor. N-linked (GlcNAc...) asparagine glycans are attached at residues N326, N354, N363, N378, and N393. Residues 382–430 (STTQKDGSSSTNTSSSGSGSAAGSASATSSSDDSSSSGSASASSSSSNA) are disordered. Residue S427 is the site of GPI-anchor amidated serine attachment. The propeptide at 428–458 (SNASSGALGMFDGLSGVGLVLSGVVAGVMLL) is removed in mature form. Residue N429 is glycosylated (N-linked (GlcNAc...) asparagine).

This sequence belongs to the polysaccharide deacetylase family. Requires Co(2+) as cofactor. Post-translationally, glycosylated.

It localises to the secreted. It is found in the cell wall. The protein localises to the cell membrane. It carries out the reaction [(1-&gt;4)-N-acetyl-beta-D-glucosaminyl](n) + n H2O = chitosan + n acetate. Functionally, hydrolyzes the N-acetamido groups of N-acetyl-D-glucosamine residues in chitin to form chitosan and acetate. Chitosan is required to anchor melanin to the cell wall, for maintenance of cell wall integrity, and for cytokinesis. The polypeptide is Chitin deacetylase 2 (Cryptococcus neoformans var. neoformans serotype D (strain B-3501A) (Filobasidiella neoformans)).